A 298-amino-acid chain; its full sequence is MAIAIIAEYNPFHNGHIYQINYVKEKFPGEKIHIILSGNYVQRGEIAIASFEKRKKIALEYGADYVHELEFEYASQAAHIFAKGALAKINSLQIDKLIFGSETNDINEFINIAKIIKDNKSQYQLFLKENLKKGLSFPKASSLASQKITGKYFQMPNDILGFEYVKQIIFNNYKITAFCHTRTNDYKSDKPSGKYASSTLIRKMIFEGKDVSKYTPMIFEKKPIRIEDLYFDFQTIIFNKTAQELRQFKLVSEGIENLFKKHINEKSYDDFVAKVNSKRYTSSRIKRIILYILLGIKN.

Residues 6–19 (IAEY…HIYQ), G100, N157, and R182 each bind ATP.

This sequence belongs to the TmcAL family.

It localises to the cytoplasm. It catalyses the reaction cytidine(34) in elongator tRNA(Met) + acetate + ATP = N(4)-acetylcytidine(34) in elongator tRNA(Met) + AMP + diphosphate. Its function is as follows. Catalyzes the formation of N(4)-acetylcytidine (ac(4)C) at the wobble position of elongator tRNA(Met), using acetate and ATP as substrates. First activates an acetate ion to form acetyladenylate (Ac-AMP) and then transfers the acetyl group to tRNA to form ac(4)C34. This chain is tRNA(Met) cytidine acetate ligase, found in Mycoplasmopsis pulmonis (strain UAB CTIP) (Mycoplasma pulmonis).